A 252-amino-acid polypeptide reads, in one-letter code: 5'-nucleotidase SurE (252 aa).

D8, D9, S40, and N93 together coordinate a divalent metal cation.

It belongs to the SurE nucleotidase family. Requires a divalent metal cation as cofactor.

It localises to the cytoplasm. The catalysed reaction is a ribonucleoside 5'-phosphate + H2O = a ribonucleoside + phosphate. In terms of biological role, nucleotidase that shows phosphatase activity on nucleoside 5'-monophosphates. This Methylocella silvestris (strain DSM 15510 / CIP 108128 / LMG 27833 / NCIMB 13906 / BL2) protein is 5'-nucleotidase SurE.